The sequence spans 311 residues: Dermonecrotic toxin (311 aa).

The N-terminal stretch at M1–T21 is a signal peptide. Positions D22–R26 are excised as a propeptide. Residue H38 is part of the active site. 2 residues coordinate Mg(2+): E58 and D60. The active-site Nucleophile is H73. An intrachain disulfide couples C77 to C83. D117 lines the Mg(2+) pocket.

Belongs to the arthropod phospholipase D family. Class I subfamily. Requires Mg(2+) as cofactor. In terms of tissue distribution, expressed by the venom gland.

It is found in the secreted. The enzyme catalyses an N-(acyl)-sphingosylphosphocholine = an N-(acyl)-sphingosyl-1,3-cyclic phosphate + choline. It carries out the reaction an N-(acyl)-sphingosylphosphoethanolamine = an N-(acyl)-sphingosyl-1,3-cyclic phosphate + ethanolamine. The catalysed reaction is a 1-acyl-sn-glycero-3-phosphocholine = a 1-acyl-sn-glycero-2,3-cyclic phosphate + choline. It catalyses the reaction a 1-acyl-sn-glycero-3-phosphoethanolamine = a 1-acyl-sn-glycero-2,3-cyclic phosphate + ethanolamine. With respect to regulation, catalytic activity and hemolysis are inhibited by divalent ion chelators (1,10-phenanthroline, EDTA, and EGTA). Functionally, dermonecrotic toxins cleave the phosphodiester linkage between the phosphate and headgroup of certain phospholipids (sphingolipid and lysolipid substrates), forming an alcohol (often choline) and a cyclic phosphate. This toxin acts on sphingomyelin (SM). It may also act on ceramide phosphoethanolamine (CPE), lysophosphatidylcholine (LPC) and lysophosphatidylethanolamine (LPE), but not on lysophosphatidylserine (LPS), and lysophosphatidylglycerol (LPG). It acts by transphosphatidylation, releasing exclusively cyclic phosphate products as second products. Shows complement-dependent hemolysis. Also induces dermonecrosis, vascular permeability, edema, inflammatory response, and platelet aggregation. The polypeptide is Dermonecrotic toxin (Loxosceles laeta (South American recluse spider)).